Consider the following 274-residue polypeptide: 4-diphosphocytidyl-2-C-methyl-D-erythritol kinase (274 aa).

Residue Lys8 is part of the active site. Residue 92–102 (PSGAGLGGGSS) participates in ATP binding. Asp134 is an active-site residue.

It belongs to the GHMP kinase family. IspE subfamily.

The enzyme catalyses 4-CDP-2-C-methyl-D-erythritol + ATP = 4-CDP-2-C-methyl-D-erythritol 2-phosphate + ADP + H(+). It functions in the pathway isoprenoid biosynthesis; isopentenyl diphosphate biosynthesis via DXP pathway; isopentenyl diphosphate from 1-deoxy-D-xylulose 5-phosphate: step 3/6. Its function is as follows. Catalyzes the phosphorylation of the position 2 hydroxy group of 4-diphosphocytidyl-2C-methyl-D-erythritol. This chain is 4-diphosphocytidyl-2-C-methyl-D-erythritol kinase, found in Porphyromonas gingivalis (strain ATCC 33277 / DSM 20709 / CIP 103683 / JCM 12257 / NCTC 11834 / 2561).